Consider the following 215-residue polypeptide: Flavin-dependent thymidylate synthase (215 aa).

The region spanning 1–215 is the ThyX domain; that stretch reads MDVRFISLTK…FPTVAAALEW (215 aa). Residues serine 56, 79 to 81, and glutamate 87 each bind FAD; that span reads RHR. Residues 76–79, 87–91, and arginine 155 each bind dUMP; these read QILR and EFSLR. The ThyX motif signature appears at 79-89; sequence RHRSFSFQEFS. Residue histidine 177 participates in FAD binding. Arginine 182 contacts dUMP. Arginine 182 (involved in ionization of N3 of dUMP, leading to its activation) is an active-site residue.

Belongs to the thymidylate synthase ThyX family. In terms of assembly, homotetramer. FAD serves as cofactor.

The catalysed reaction is dUMP + (6R)-5,10-methylene-5,6,7,8-tetrahydrofolate + NADPH + H(+) = dTMP + (6S)-5,6,7,8-tetrahydrofolate + NADP(+). It functions in the pathway pyrimidine metabolism; dTTP biosynthesis. Functionally, catalyzes the reductive methylation of 2'-deoxyuridine-5'-monophosphate (dUMP) to 2'-deoxythymidine-5'-monophosphate (dTMP) while utilizing 5,10-methylenetetrahydrofolate (mTHF) as the methyl donor, and NADPH and FADH(2) as the reductant. In Synechocystis sp. (strain ATCC 27184 / PCC 6803 / Kazusa), this protein is Flavin-dependent thymidylate synthase.